Here is a 205-residue protein sequence, read N- to C-terminus: Ephrin-A1 (205 aa).

The first 18 residues, 1-18, serve as a signal peptide directing secretion; that stretch reads MEFFWASLLGLCCSLAAA. The Ephrin RBD domain maps to 19 to 151; sequence NRHTVFWNSS…RLKVMIAGKI (133 aa). An N-linked (GlcNAc...) asparagine glycan is attached at N26. 2 disulfides stabilise this stretch: C51-C92 and C80-C140. S182 carries the GPI-anchor amidated serine lipid modification. The propeptide at 183–205 is removed in mature form; sequence AAPRLFPLAWAVLLLPFLLLQIP.

It belongs to the ephrin family. In terms of assembly, monomer. Homodimer. Forms heterodimers with EPHA2. Binds to the receptor tyrosine kinases EPHA2, EPHA3, EPHA4, EPHA5, EPHA6 and EPHA7. Also binds with low affinity to EPHA1. Post-translationally, undergoes proteolysis by a metalloprotease to give rise to a soluble monomeric form. In terms of processing, N-Glycosylation is required for binding to EPHA2 receptor and inducing its internalization.

The protein localises to the cell membrane. It is found in the secreted. Its function is as follows. Cell surface GPI-bound ligand for Eph receptors, a family of receptor tyrosine kinases which are crucial for migration, repulsion and adhesion during neuronal, vascular and epithelial development. Binds promiscuously Eph receptors residing on adjacent cells, leading to contact-dependent bidirectional signaling into neighboring cells. Plays an important role in angiogenesis and tumor neovascularization. The recruitment of VAV2, VAV3 and PI3-kinase p85 subunit by phosphorylated EPHA2 is critical for EFNA1-induced RAC1 GTPase activation and vascular endothelial cell migration and assembly. Exerts anti-oncogenic effects in tumor cells through activation and down-regulation of EPHA2. Activates EPHA2 by inducing tyrosine phosphorylation which leads to its internalization and degradation. Acts as a negative regulator in the tumorigenesis of gliomas by down-regulating EPHA2 and FAK. Can evoke collapse of embryonic neuronal growth cone and regulates dendritic spine morphogenesis. The chain is Ephrin-A1 (EFNA1) from Bos taurus (Bovine).